The following is a 403-amino-acid chain: Acetylornithine aminotransferase (403 aa).

Pyridoxal 5'-phosphate contacts are provided by residues 101–102 and Phe-134; that span reads GA. Residue Arg-137 coordinates N(2)-acetyl-L-ornithine. Position 219-222 (219-222) interacts with pyridoxal 5'-phosphate; that stretch reads DEVQ. Residue Lys-248 is modified to N6-(pyridoxal phosphate)lysine. Thr-276 is a binding site for N(2)-acetyl-L-ornithine. Thr-277 lines the pyridoxal 5'-phosphate pocket.

Belongs to the class-III pyridoxal-phosphate-dependent aminotransferase family. ArgD subfamily. In terms of assembly, homodimer. It depends on pyridoxal 5'-phosphate as a cofactor.

It is found in the cytoplasm. It catalyses the reaction N(2)-acetyl-L-ornithine + 2-oxoglutarate = N-acetyl-L-glutamate 5-semialdehyde + L-glutamate. Its pathway is amino-acid biosynthesis; L-arginine biosynthesis; N(2)-acetyl-L-ornithine from L-glutamate: step 4/4. The chain is Acetylornithine aminotransferase from Brucella melitensis biotype 1 (strain ATCC 23456 / CCUG 17765 / NCTC 10094 / 16M).